The chain runs to 255 residues: F-box only protein 44 (255 aa).

Residues V3–K50 form the F-box domain. The FBA domain maps to F71–P252.

As to quaternary structure, part of a SCF (SKP1-cullin-F-box) protein ligase complex. Interacts with SKP1 and CUL1. As to expression, abundantly expressed in brain and kidney. Expressed at lower levels in heart, spleen and liver.

In terms of biological role, substrate-recognition component of the SCF (SKP1-CUL1-F-box protein)-type E3 ubiquitin ligase complex. This chain is F-box only protein 44 (FBXO44), found in Homo sapiens (Human).